Consider the following 153-residue polypeptide: Histone H2B.4 (153 aa).

Composition is skewed to basic and acidic residues over residues 1-10 and 20-54; these read MAPKKDEKPA and AKAE…GEKK. Residues 1-60 are disordered; sequence MAPKKDEKPATAEAGAEAPAKAEAKPKAEKAAKKAKKEPSKKAAKEPKGDGEKKDKKKKK. N6-acetyllysine is present on residues K41 and K42. Residue K149 forms a Glycyl lysine isopeptide (Lys-Gly) (interchain with G-Cter in ubiquitin) linkage.

It belongs to the histone H2B family. In terms of assembly, the nucleosome is a histone octamer containing two molecules each of H2A, H2B, H3 and H4 assembled in one H3-H4 heterotetramer and two H2A-H2B heterodimers. The octamer wraps approximately 147 bp of DNA. In terms of processing, the N-terminus is blocked. Post-translationally, can be acetylated to form H2BK33ac and H2BK34ac. Acetylated mainly on the ubiquitinated form. Monoubiquitinated to form H2BK143ub1; which is increased during the light period and may give a specific tag for epigenetic transcriptional activation.

It is found in the nucleus. The protein localises to the chromosome. Its function is as follows. Core component of nucleosome. Nucleosomes wrap and compact DNA into chromatin, limiting DNA accessibility to the cellular machineries which require DNA as a template. Histones thereby play a central role in transcription regulation, DNA repair, DNA replication and chromosomal stability. DNA accessibility is regulated via a complex set of post-translational modifications of histones, also called histone code, and nucleosome remodeling. The protein is Histone H2B.4 of Chlamydomonas reinhardtii (Chlamydomonas smithii).